A 293-amino-acid polypeptide reads, in one-letter code: Autophagy-related protein 36 (293 aa).

Composition is skewed to polar residues over residues 98–108 (ISSDSNKNSPP) and 260–273 (GETL…ASSS). Disordered regions lie at residues 98 to 121 (ISSD…NIRS) and 250 to 273 (SRSR…ASSS).

As to quaternary structure, interacts with PEX3, ATG8 and ATG11.

It is found in the peroxisome. In terms of biological role, required for autophagic breakdown of peroxisomes, called pexophagy, through linking peroxisomes to the autophagy apparatus. Involved in regulation of the glyoxylate cycle. This chain is Autophagy-related protein 36 (ATG36), found in Saccharomyces cerevisiae (strain ATCC 204508 / S288c) (Baker's yeast).